We begin with the raw amino-acid sequence, 356 residues long: Histidinol-phosphate aminotransferase (356 aa).

Lysine 208 is subject to N6-(pyridoxal phosphate)lysine.

This sequence belongs to the class-II pyridoxal-phosphate-dependent aminotransferase family. Histidinol-phosphate aminotransferase subfamily. As to quaternary structure, homodimer. Pyridoxal 5'-phosphate serves as cofactor.

It catalyses the reaction L-histidinol phosphate + 2-oxoglutarate = 3-(imidazol-4-yl)-2-oxopropyl phosphate + L-glutamate. Its pathway is amino-acid biosynthesis; L-histidine biosynthesis; L-histidine from 5-phospho-alpha-D-ribose 1-diphosphate: step 7/9. In Lactococcus lactis subsp. cremoris (strain SK11), this protein is Histidinol-phosphate aminotransferase.